We begin with the raw amino-acid sequence, 491 residues long: Trigger factor (491 aa).

The 86-residue stretch at 169–254 (GDRVTIDYLG…VKDVAAAAPI (86 aa)) folds into the PPIase FKBP-type domain. The tract at residues 433–491 (KTVSKDELMAEDEAEDKPAKKAPAKKKAAAKAEAGEGEEAAAPKKKAPAKKKAADDSAE) is disordered. Positions 452 to 461 (KKAPAKKKAA) are enriched in basic residues.

Belongs to the FKBP-type PPIase family. Tig subfamily.

It is found in the cytoplasm. It catalyses the reaction [protein]-peptidylproline (omega=180) = [protein]-peptidylproline (omega=0). Functionally, involved in protein export. Acts as a chaperone by maintaining the newly synthesized protein in an open conformation. Functions as a peptidyl-prolyl cis-trans isomerase. This chain is Trigger factor, found in Sinorhizobium fredii (strain NBRC 101917 / NGR234).